The chain runs to 118 residues: Basic phospholipase A2 nigexine (118 aa).

7 disulfides stabilise this stretch: Cys-11/Cys-70, Cys-26/Cys-117, Cys-28/Cys-44, Cys-43/Cys-98, Cys-50/Cys-91, Cys-59/Cys-84, and Cys-77/Cys-89. Residues Tyr-27, Gly-29, and Gly-31 each contribute to the Ca(2+) site. His-47 is an active-site residue. Asp-48 is a Ca(2+) binding site. Positions 52–69 (EKAGKMGCWPYFTLYKYK) match the Coagulation factor Xa binding motif motif. Asp-92 is a catalytic residue.

This sequence belongs to the phospholipase A2 family. Group I subfamily. D49 sub-subfamily. Requires Ca(2+) as cofactor. In terms of tissue distribution, expressed by the venom gland.

The protein resides in the secreted. The enzyme catalyses a 1,2-diacyl-sn-glycero-3-phosphocholine + H2O = a 1-acyl-sn-glycero-3-phosphocholine + a fatty acid + H(+). Functionally, snake venom phospholipase A2 (PLA2) that shows anticoagulant activity, has cytotoxic activity and affects neuromuscular transmission in vitro. PLA2 catalyzes the calcium-dependent hydrolysis of the 2-acyl groups in 3-sn-phosphoglycerides. This is Basic phospholipase A2 nigexine from Naja pallida (Red spitting cobra).